The chain runs to 61 residues: MSILKSLTSISKISKSSNDSILNINNSNNLNSSNQNSNNEISRWTPIFTVIGRGGKNVIAA.

This is an uncharacterized protein from Dictyostelium discoideum (Social amoeba).